The primary structure comprises 158 residues: Putative pre-16S rRNA nuclease (158 aa).

It belongs to the YqgF nuclease family.

Its subcellular location is the cytoplasm. Functionally, could be a nuclease involved in processing of the 5'-end of pre-16S rRNA. This is Putative pre-16S rRNA nuclease from Paracoccus denitrificans (strain Pd 1222).